We begin with the raw amino-acid sequence, 198 residues long: Holliday junction branch migration complex subunit RuvA (198 aa).

The tract at residues 1–61 (MTLYKIGEIV…DYIQQTYGFK (61 aa)) is domain I. Residues 62 to 139 (TFKERLLFTD…KIIQNKEVKK (78 aa)) are domain II. The tract at residues 140-144 (FDDIT) is flexible linker. The interval 144-198 (TNIKELKQTLNKLGFKASDIDYAVNNISSTKELDLMVEESINLITTQMHANNQTT) is domain III.

Belongs to the RuvA family. Homotetramer. Forms an RuvA(8)-RuvB(12)-Holliday junction (HJ) complex. HJ DNA is sandwiched between 2 RuvA tetramers; dsDNA enters through RuvA and exits via RuvB. An RuvB hexamer assembles on each DNA strand where it exits the tetramer. Each RuvB hexamer is contacted by two RuvA subunits (via domain III) on 2 adjacent RuvB subunits; this complex drives branch migration. In the full resolvosome a probable DNA-RuvA(4)-RuvB(12)-RuvC(2) complex forms which resolves the HJ.

The protein resides in the cytoplasm. In terms of biological role, the RuvA-RuvB-RuvC complex processes Holliday junction (HJ) DNA during genetic recombination and DNA repair, while the RuvA-RuvB complex plays an important role in the rescue of blocked DNA replication forks via replication fork reversal (RFR). RuvA specifically binds to HJ cruciform DNA, conferring on it an open structure. The RuvB hexamer acts as an ATP-dependent pump, pulling dsDNA into and through the RuvAB complex. HJ branch migration allows RuvC to scan DNA until it finds its consensus sequence, where it cleaves and resolves the cruciform DNA. The protein is Holliday junction branch migration complex subunit RuvA of Mycoplasmopsis synoviae (strain 53) (Mycoplasma synoviae).